The following is a 66-amino-acid chain: UPF0370 protein YpfN (66 aa).

Residues 4–24 traverse the membrane as a helical segment; it reads LAKYWWILVIVFLVGVLLNVI. A disordered region spans residues 39 to 66; sequence KPELPPHRDFNDKWDDDDDWPKKDQPKK. The segment covering 42 to 51 has biased composition (basic and acidic residues); it reads LPPHRDFNDK.

This sequence belongs to the UPF0370 family.

It localises to the cell membrane. This Escherichia coli O139:H28 (strain E24377A / ETEC) protein is UPF0370 protein YpfN.